A 406-amino-acid polypeptide reads, in one-letter code: Putative sodium-coupled neutral amino acid transporter 11 (406 aa).

Topologically, residues 1–7 (MKQAGFP) are cytoplasmic. A helical membrane pass occupies residues 8–28 (LGILLLFWVSYVTDFSLVLLI). Asn44 carries N-linked (GlcNAc...) asparagine glycosylation. 6 helical membrane passes run 48–68 (GFPG…IAMI), 93–113 (VFIG…LPLS), 121–141 (LGKV…IVMA), 156–176 (AWVF…FAFI), 202–222 (MSIV…YLTF), and 241–263 (VTFG…CFVT). Asn275 is a glycosylation site (N-linked (GlcNAc...) asparagine). The next 3 membrane-spanning stretches (helical) occupy residues 279–299 (VFHI…SLLI), 301–321 (CLGI…IFII), and 340–360 (IMSC…FVMA).

This sequence belongs to the amino acid/polyamine transporter 2 family.

It localises to the membrane. Its function is as follows. Putative sodium-dependent amino acid/proton antiporter. The polypeptide is Putative sodium-coupled neutral amino acid transporter 11 (SLC38A11) (Homo sapiens (Human)).